The chain runs to 107 residues: U1-lycotoxin-Ls1t (107 aa).

Residues 1–20 (MMKVLVVVALLVTLISYSSS) form the signal peptide. A propeptide spanning residues 21–41 (EGIDDLEADELLSLMANEQTR) is cleaved from the precursor. Disulfide bonds link cysteine 44–cysteine 59, cysteine 51–cysteine 68, cysteine 58–cysteine 86, and cysteine 70–cysteine 84.

This sequence belongs to the neurotoxin 19 (CSTX) family. 04 (U1-Lctx) subfamily. As to expression, expressed by the venom gland.

The protein localises to the secreted. The chain is U1-lycotoxin-Ls1t from Lycosa singoriensis (Wolf spider).